The following is a 170-amino-acid chain: Large ribosomal subunit protein uL10 (170 aa).

The protein belongs to the universal ribosomal protein uL10 family. As to quaternary structure, part of the ribosomal stalk of the 50S ribosomal subunit. The N-terminus interacts with L11 and the large rRNA to form the base of the stalk. The C-terminus forms an elongated spine to which L12 dimers bind in a sequential fashion forming a multimeric L10(L12)X complex.

Its function is as follows. Forms part of the ribosomal stalk, playing a central role in the interaction of the ribosome with GTP-bound translation factors. This chain is Large ribosomal subunit protein uL10, found in Fusobacterium nucleatum subsp. nucleatum (strain ATCC 25586 / DSM 15643 / BCRC 10681 / CIP 101130 / JCM 8532 / KCTC 2640 / LMG 13131 / VPI 4355).